The primary structure comprises 423 residues: WD repeat and SOCS box-containing protein 1 (423 aa).

The segment at 76–100 (DRSSGAGPRRLSRQNSEGSLLPGEP) is disordered. 5 WD repeats span residues 125–166 (SRCV…LLLN), 169–209 (DHTD…NMVK), 213–252 (GHQN…LIRK), 255–294 (GHHN…VLLE), and 310–347 (ANDR…KSPQ). Positions 373–423 (DGSVHFWASPRSIASLQHLCRMTLRRVMPTQQVYTLPIPFSMQDYLAYKTL) constitute an SOCS box domain.

In terms of assembly, component of a probable ECS E3 ubiquitin-protein ligase complex that contains the Elongin BC complex.

Its pathway is protein modification; protein ubiquitination. Its function is as follows. Probable substrate-recognition component of a SCF-like ECS (Elongin-Cullin-SOCS-box protein) E3 ubiquitin-protein ligase complex which mediates the ubiquitination and subsequent proteasomal degradation of target proteins. This is WD repeat and SOCS box-containing protein 1 (wsb1) from Danio rerio (Zebrafish).